Reading from the N-terminus, the 288-residue chain is Aquaporin PIP 1-3 (288 aa).

Residues 1–30 (MEGKEEDVRLGANRYTERQPIGTAAQGAEE) form a disordered region. A run of 2 helical transmembrane segments spans residues 57 to 77 (IAEF…VMGV) and 92 to 114 (IAWS…SGGH). The short motif at 116–118 (NPA) is the NPA 1 element. 3 helical membrane-spanning segments follow: residues 135–155 (VFYM…VKGF), 177–197 (GDGL…VFSA), and 211–231 (ILAP…TIPI). The NPA 2 signature appears at 237 to 239 (NPA). A helical transmembrane segment spans residues 259–279 (IFWVGPFIGAALAAIYHVVVI).

The protein belongs to the MIP/aquaporin (TC 1.A.8) family. PIP (TC 1.A.8.11) subfamily. In terms of tissue distribution, expressed in roots and leaves.

It is found in the cell membrane. Water channel required to facilitate the transport of water across cell membrane. Increases the capacity for root water uptake under water deficit. May play a role in drought avoidance in upland rice. In Oryza sativa subsp. japonica (Rice), this protein is Aquaporin PIP 1-3 (PIP1-3).